A 404-amino-acid polypeptide reads, in one-letter code: Probable eukaryotic initiation factor 4A (404 aa).

Positions 1 to 28 are disordered; the sequence is MAQQGKVEPQDQDSFLDDQPGIRPIPSF. Positions 26–54 match the Q motif motif; the sequence is PSFDDMPLHQNLLRGIYSHGFEKPSSIQQ. Residues 57–231 enclose the Helicase ATP-binding domain; that stretch reads IVPFTRGGDI…KKFMRDPTRI (175 aa). 70–77 contacts ATP; the sequence is AQSGTGKT. Positions 179-182 match the DEAD box motif; that stretch reads DEAD. The Helicase C-terminal domain maps to 242 to 402; sequence GIKQYFIAVE…ELPVDFAAYL (161 aa).

The protein belongs to the DEAD box helicase family. eIF4A subfamily. As to quaternary structure, eIF4F is a multi-subunit complex, the composition of which varies with external and internal environmental conditions. It is composed of at least EIF4A, EIF4E and EIF4G.

The enzyme catalyses ATP + H2O = ADP + phosphate + H(+). ATP-dependent RNA helicase which is a subunit of the eIF4F complex involved in cap recognition and is required for mRNA binding to ribosome. In the current model of translation initiation, eIF4A unwinds RNA secondary structures in the 5'-UTR of mRNAs which is necessary to allow efficient binding of the small ribosomal subunit, and subsequent scanning for the initiator codon. The polypeptide is Probable eukaryotic initiation factor 4A (Trypanosoma cruzi (strain CL Brener)).